The sequence spans 131 residues: Small ribosomal subunit protein bS16 (131 aa).

A compositionally biased stretch (basic and acidic residues) spans 87 to 117; it reads IGKSKQEELRKSEAKTSAKNKKANEEKANEE. The disordered stretch occupies residues 87–131; it reads IGKSKQEELRKSEAKTSAKNKKANEEKANEEKVEESETLEASSEA.

It belongs to the bacterial ribosomal protein bS16 family.

This is Small ribosomal subunit protein bS16 from Prochlorococcus marinus (strain SARG / CCMP1375 / SS120).